The sequence spans 498 residues: ATP synthase subunit beta, chloroplastic (498 aa).

A Phosphothreonine modification is found at threonine 6. The residue at position 13 (serine 13) is a Phosphoserine. Residue glycine 172 to threonine 179 participates in ATP binding.

This sequence belongs to the ATPase alpha/beta chains family. As to quaternary structure, F-type ATPases have 2 components, CF(1) - the catalytic core - and CF(0) - the membrane proton channel. CF(1) has five subunits: alpha(3), beta(3), gamma(1), delta(1), epsilon(1). CF(0) has four main subunits: a(1), b(1), b'(1) and c(9-12).

It localises to the plastid. It is found in the chloroplast thylakoid membrane. It carries out the reaction ATP + H2O + 4 H(+)(in) = ADP + phosphate + 5 H(+)(out). Functionally, produces ATP from ADP in the presence of a proton gradient across the membrane. The catalytic sites are hosted primarily by the beta subunits. The protein is ATP synthase subunit beta, chloroplastic of Arabis hirsuta (Hairy rock-cress).